The following is a 449-amino-acid chain: Endoglucanase A (449 aa).

Positions 1–31 form a signal peptide, tat-type signal; sequence MSTRRTAAALLAAAAVAVGGLTALTTTAAQA. The region spanning 32 to 137 is the CBM2 domain; that stretch reads APGCRVDYAV…SLNGTTCTGT (106 aa). A disulfide bridge links cysteine 35 with cysteine 134. Positions 127 to 170 are disordered; that stretch reads FSLNGTTCTGTVPTTSPTPTPTPTTPTPTPTPTPTPTPTVTPQP. Residues 132 to 141 are compositionally biased toward low complexity; it reads TTCTGTVPTT. The segment at 139 to 168 is linker ('hinge') (Pro-Thr box); it reads PTTSPTPTPTPTTPTPTPTPTPTPTPTVTP. Residues 142 to 167 are compositionally biased toward pro residues; that stretch reads SPTPTPTPTTPTPTPTPTPTPTPTVT. Aspartate 247 is a catalytic residue. Cystine bridges form between cysteine 248-cysteine 291 and cysteine 390-cysteine 426. The Proton donor role is filled by aspartate 283. Catalysis depends on aspartate 423, which acts as the Nucleophile. Residues 438 to 449 are catalytic; sequence EIALEMARNARW.

It belongs to the glycosyl hydrolase 6 (cellulase B) family. Post-translationally, the linker region (also termed 'hinge') may be a potential site for proteolysis. Predicted to be exported by the Tat system. The position of the signal peptide cleavage has not been experimentally proven.

The enzyme catalyses Endohydrolysis of (1-&gt;4)-beta-D-glucosidic linkages in cellulose, lichenin and cereal beta-D-glucans.. In terms of biological role, the biological conversion of cellulose to glucose generally requires three types of hydrolytic enzymes: (1) Endoglucanases which cut internal beta-1,4-glucosidic bonds; (2) Exocellobiohydrolases that cut the disaccharide cellobiose from the non-reducing end of the cellulose polymer chain; (3) Beta-1,4-glucosidases which hydrolyze the cellobiose and other short cello-oligosaccharides to glucose. In Cellulomonas fimi, this protein is Endoglucanase A (cenA).